Here is a 590-residue protein sequence, read N- to C-terminus: ATP-dependent lipid A-core flippase (590 aa).

6 helical membrane passes run 31 to 51 (IFIA…VIPK), 74 to 94 (AILT…GYLL), 132 to 152 (AVIF…ITLV), 159 to 179 (VALL…VSVI), 259 to 279 (VTAF…MIQA), and 286 to 306 (IGGF…LKHL). Positions 33-315 (IAAILAMAVV…LTDINQPLTR (283 aa)) constitute an ABC transmembrane type-1 domain. Positions 347-585 (LVFERVGFRY…NGLYAGLHRI (239 aa)) constitute an ABC transporter domain. An ATP-binding site is contributed by 381-388 (GPSGSGKT).

This sequence belongs to the ABC transporter superfamily. Lipid exporter (TC 3.A.1.106) family. In terms of assembly, homodimer.

The protein localises to the cell inner membrane. It carries out the reaction ATP + H2O + lipid A-core oligosaccharideSide 1 = ADP + phosphate + lipid A-core oligosaccharideSide 2.. Functionally, involved in lipopolysaccharide (LPS) biosynthesis. Translocates lipid A-core from the inner to the outer leaflet of the inner membrane. Transmembrane domains (TMD) form a pore in the inner membrane and the ATP-binding domain (NBD) is responsible for energy generation. In Cupriavidus pinatubonensis (strain JMP 134 / LMG 1197) (Cupriavidus necator (strain JMP 134)), this protein is ATP-dependent lipid A-core flippase.